The primary structure comprises 34 residues: Turripeptide OL127 (34 aa).

Post-translationally, contains 4 disulfide bonds. As to expression, expressed by the venom duct.

Its subcellular location is the secreted. In terms of biological role, acts as a neurotoxin by inhibiting an ion channel. This chain is Turripeptide OL127, found in Iotyrris olangoensis (Sea snail).